Consider the following 336-residue polypeptide: Phospho-N-acetylmuramoyl-pentapeptide-transferase (336 aa).

Helical transmembrane passes span 3 to 23, 53 to 73, 78 to 98, 118 to 138, 143 to 163, 174 to 194, 200 to 220, 226 to 246, 251 to 271, and 316 to 336; these read LTLI…PYFI, GGTV…LFSI, SLAL…IGFL, LALQ…PSGI, VFGY…FWVV, GIDG…GVIA, FDVL…FCFN, VFMG…ISIA, WTLL…MLQV, and AFLW…LYVF.

It belongs to the glycosyltransferase 4 family. MraY subfamily. The cofactor is Mg(2+).

It is found in the cell membrane. It carries out the reaction UDP-N-acetyl-alpha-D-muramoyl-L-alanyl-gamma-D-glutamyl-L-lysyl-D-alanyl-D-alanine + di-trans,octa-cis-undecaprenyl phosphate = Mur2Ac(oyl-L-Ala-gamma-D-Glu-L-Lys-D-Ala-D-Ala)-di-trans,octa-cis-undecaprenyl diphosphate + UMP. It functions in the pathway cell wall biogenesis; peptidoglycan biosynthesis. Its function is as follows. Catalyzes the initial step of the lipid cycle reactions in the biosynthesis of the cell wall peptidoglycan: transfers peptidoglycan precursor phospho-MurNAc-pentapeptide from UDP-MurNAc-pentapeptide onto the lipid carrier undecaprenyl phosphate, yielding undecaprenyl-pyrophosphoryl-MurNAc-pentapeptide, known as lipid I. The polypeptide is Phospho-N-acetylmuramoyl-pentapeptide-transferase (Streptococcus pyogenes serotype M5 (strain Manfredo)).